The chain runs to 219 residues: uncharacterized protein (219 aa).

2 helical membrane passes run 8–28 (MILF…TLSV) and 194–214 (GIPG…GLLF).

It is found in the cell membrane. This is an uncharacterized protein from Archaeoglobus fulgidus (strain ATCC 49558 / DSM 4304 / JCM 9628 / NBRC 100126 / VC-16).